A 379-amino-acid polypeptide reads, in one-letter code: Cytochrome b (379 aa).

The next 4 helical transmembrane spans lie at 33 to 53 (FGSL…FLAM), 77 to 98 (WLIR…FIHV), 113 to 133 (WNIG…GYVL), and 178 to 198 (FFAF…VHLL). Heme b contacts are provided by H83 and H97. The heme b site is built by H182 and H196. H201 lines the a ubiquinone pocket. 4 helical membrane passes run 226-246 (TKDL…ALFF), 288-308 (LGGV…PLLN), 320-340 (VTQV…WIGG), and 347-367 (FTTI…ILIP).

It belongs to the cytochrome b family. In terms of assembly, the cytochrome bc1 complex contains 11 subunits: 3 respiratory subunits (MT-CYB, CYC1 and UQCRFS1), 2 core proteins (UQCRC1 and UQCRC2) and 6 low-molecular weight proteins (UQCRH/QCR6, UQCRB/QCR7, UQCRQ/QCR8, UQCR10/QCR9, UQCR11/QCR10 and a cleavage product of UQCRFS1). This cytochrome bc1 complex then forms a dimer. Heme b is required as a cofactor.

It localises to the mitochondrion inner membrane. Component of the ubiquinol-cytochrome c reductase complex (complex III or cytochrome b-c1 complex) that is part of the mitochondrial respiratory chain. The b-c1 complex mediates electron transfer from ubiquinol to cytochrome c. Contributes to the generation of a proton gradient across the mitochondrial membrane that is then used for ATP synthesis. This is Cytochrome b (MT-CYB) from Akodon montensis (Montane grass mouse).